We begin with the raw amino-acid sequence, 599 residues long: MKPTMAILERISKNSQENIDEVFTRLYRYLLRPDIYYVAYQNLYSNKGASTKGILDDTADGFSEEKIKKIIQSLKDGTYYPQPVRRMYIAKKNSKKMRPLGIPTFTDKLIQEAVRIILESIYEPVFEDVSHGFRPQRSCHTALKTIKREFGGARWFVEGDIKGCFDNIDHVTLIGLINLKIKDMKMSQLIYKFLKAGYLENWQYHKTYSGTPQGGILSPLLANIYLHELDKFVLQLKMKFDRESPERITPEYRELHNEIKRISHRLKKLEGEEKAKVLLEYQEKRKRLPTLPCTSQTNKVLKYVRYADDFIISVKGSKEDCQWIKEQLKLFIHNKLKMELSEEKTLITHSSQPARFLGYDIRVRRSGTIKRSGKVKKRTLNGSVELLIPLQDKIRQFIFDKKIAIQKKDSSWFPVHRKYLIRSTDLEIITIYNSELRGICNYYGLASNFNQLNYFAYLMEYSCLKTIASKHKGTLSKTISMFKDGSGSWGIPYEIKQGKQRRYFANFSECKSPYQFTDEISQAPVLYGYARNTLENRLKAKCCELCGTSDENTSYEIHHVNKVKNLKGKEKWEMAMIAKQRKTLVVCFHCHRHVIHKHK.

The Reverse transcriptase domain occupies 70-361 (IIQSLKDGTY…QPARFLGYDI (292 aa)). The tract at residues 381-549 (NGSVELLIPL…AKCCELCGTS (169 aa)) is intron maturase type-2.

The protein in the N-terminal section; belongs to the bacterial reverse transcriptase family. Homodimer. Mg(2+) is required as a cofactor.

The catalysed reaction is DNA(n) + a 2'-deoxyribonucleoside 5'-triphosphate = DNA(n+1) + diphosphate. Multifunctional protein that promotes group II intron splicing and mobility by acting both on RNA and DNA. It has three activities: reverse transcriptase (RT) for intron duplication, maturase to promote splicing, and DNA endonuclease for site-specific cleavage of recipient alleles. The intron-encoded protein promotes splicing by facilitating the formation of the catalytically active structure of the intron RNA. After splicing, the protein remains bound to the excised intron lariat RNA, forming ribonucleoprotein particles, and cleaving the antisense strand of the recipient DNA in the 3' exon. After DNA cleavage, retrohoming occurs by a target DNA-primed reverse transcription of the intron RNA that had reverse spliced into the sense strand of the recipient DNA. It also contributes to the recognition of the DNA target site and acts as a repressor of its own translation. This Lactococcus lactis subsp. cremoris (Streptococcus cremoris) protein is Group II intron-encoded protein LtrA (ltrA).